The chain runs to 291 residues: uncharacterized protein (291 aa).

Residues 5–19 (AFIG…MAGH) and Thr97 contribute to the NAD(+) site. Lys172 is an active-site residue. Residue Lys240 coordinates NAD(+).

It belongs to the HIBADH-related family.

This is an uncharacterized protein from Shewanella frigidimarina (strain NCIMB 400).